Here is a 739-residue protein sequence, read N- to C-terminus: Nucleoprotein (739 aa).

Positions 1–25 (MDSRPQKIWMAPSLTESDMDYHKIL) are oligomerization, N-terminal arm. The segment at 26-405 (TAGLSVQQGI…TLRKERLAKL (380 aa)) is NP core. Residues 415-647 (PKTSGHYDDD…DSDNTQSEHS (233 aa)) are disordered. 2 stretches are compositionally biased toward low complexity: residues 449-458 (SQDTTIPDVV) and 504-514 (KGGQQKNSQKG). A Host PPP2R5C-binding motif motif is present at residues 562–567 (LTPINE). Positions 567–579 (EEADPLDDADDET) are enriched in acidic residues. The short motif at 606 to 611 (PPAPVY) is the VP30-binding motif element. A compositionally biased stretch (basic and acidic residues) spans 611–638 (YRDHSEKKELPQDEQQDQDHTQEARNQD).

This sequence belongs to the filoviruses nucleoprotein family. As to quaternary structure, homooligomer. Homomultimerizes to form the nucleocapsid. Binds to viral genomic RNA. Interacts with VP35 and VP30 to form the nucleocapsid. Interacts with host PPP2R5C; this interaction leads to VP30 dephosphorylation and viral transcription. Interacts with VP24; this interaction facilitates nucleocapsid assembly and genome packaging. Interacts with matrix protein VP40; this interaction allows recruitment of the nucleocapsid into progeny virions. Interacts with host STAU1. Interacts with host NXF1 (via RNA-binding domain); this interaction recruits NXF1 to the inclusion bodies were viral replication takes place, probably to export viral mRNA-NXF1 complexes from these sites. Interacts with host CCDC92; this interaction sequesters NP in the host cytoplasm. Interacts with host TRIM14. In terms of processing, phosphorylated by host. Post-translationally, O-glycosylated by host. Acetylated by host EP300 in vitro.

The protein localises to the virion. It is found in the host cytoplasm. Functionally, oligomerizes into helical capsid to encapsidate the viral genome, protecting it from nucleases and the cellular innate immune response. VP35 binds to and stabilizes monomeric NP, keeping it soluble. Upon virus replication, NP is recruited to bind cooperatively viral genomic RNA and VP35 is released. The encapsidated genomic RNA is termed the nucleocapsid and serves as template for transcription and replication. The nucleocapsid is helical with a pitch of 10.81 NP per turn and a diameter of about 22nm. Each NP binds to six nucleotides of viral genomic RNA, three being exposed to the solvant and three hidden into the nucleocapsid. Also recruits host PPP2R5C phosphatase to dephosphorylate VP30 and thereby promote viral transcription. Upon virion assembly and budding, NP binds to VP24 and possibly host STAU1. In Epomops franqueti (Franquet's epauletted fruit bat), this protein is Nucleoprotein (NP).